The chain runs to 224 residues: Cytidylate kinase (224 aa).

G11 to T19 is a binding site for ATP.

Belongs to the cytidylate kinase family. Type 1 subfamily.

It localises to the cytoplasm. It catalyses the reaction CMP + ATP = CDP + ADP. The enzyme catalyses dCMP + ATP = dCDP + ADP. This chain is Cytidylate kinase, found in Exiguobacterium sp. (strain ATCC BAA-1283 / AT1b).